Here is a 434-residue protein sequence, read N- to C-terminus: Perilipin-3 (434 aa).

The interval 1–22 is disordered; the sequence is MSADGAEADGSTQVTVEEPVQQ. At S2 the chain carries N-acetylserine. S31 is subject to Phosphoserine. K65 bears the N6-acetyllysine mark. Position 91 is a phosphoserine (S91). K122 participates in a covalent cross-link: Glycyl lysine isopeptide (Lys-Gly) (interchain with G-Cter in SUMO1). Phosphoserine occurs at positions 130 and 148. Position 170 is a phosphothreonine (T170). Phosphoserine is present on residues S175 and S179. T216 is modified (phosphothreonine). S217 and S241 each carry phosphoserine. Phosphotyrosine is present on Y251. Coiled coils occupy residues 252-277 and 353-377; these read EHSLGKLRATKQRAQEALLQLSQVLS and TNVKDQVQQARRQVEDLQATFSSIH.

This sequence belongs to the perilipin family. In terms of assembly, homooligomer. Interacts with M6PR (via the cytoplasmic domain). Interacts with IGF2R (via the cytoplasmic domain). May exist as a homodimer. Post-translationally, phosphorylation at Tyr-251 by isoform 1 of CHKA (CHKalpha2) promotes dissociation from lipid droplets: dissociation is followed by recruitment of autophagosome machinery to lipid droplets and subsequent lipid droplet lipolysis.

The protein localises to the lipid droplet. The protein resides in the endosome membrane. It is found in the cytoplasm. Functionally, structural component of lipid droplets, which is required for the formation and maintenance of lipid storage droplets. Required for the transport of mannose 6-phosphate receptors (MPR) from endosomes to the trans-Golgi network. The protein is Perilipin-3 (PLIN3) of Homo sapiens (Human).